Here is a 440-residue protein sequence, read N- to C-terminus: MKLAYWMYTGPAHIGTLRIASSFKNVHAIMHAPLGDDYFNVMRSMLERERNYTPVTTSVVDRNVLARGSQEKVIDNILRKDKEEQPDLIVLTPTCTSSILQEDLQNFVEQASLNSMADVLLADVNHYRINELQACDKTLEQIVRFYIEKNRASLTLEKVKTLLPSVNLIGISSLGFHNNHDTRELKKLFELYEIILNCSLPQGTTVKTLINLPKAWLNILPYRELGLLTSKYLNKEFGLLSLVILPMGNINLNRFLKKLLFSLKLENNTITKVINIKLLKLLNLNWIKKEAIKSKLKRKKAIIFGSSNHVATLTKLLSKEIGLEIILCGTYCKSESKWFSEQVQNYCNKILITEDHTMISNEISKLKPDVIFGTQMERHIGKRLGIPCGVISSPIHIQNFPLSYKPMVGYEGVKTIMDLLFNSLNLKDRKNSFTLFNEII.

Asp-36 is a [4Fe-4S] cluster binding site. Position 427–428 (427–428 (KD)) interacts with substrate.

It belongs to the ChlB/BchB/BchZ family. In terms of assembly, protochlorophyllide reductase is composed of three subunits; ChlL, ChlN and ChlB. Forms a heterotetramer of two ChlB and two ChlN subunits. [4Fe-4S] cluster serves as cofactor.

The protein resides in the plastid. It is found in the cyanelle. It catalyses the reaction chlorophyllide a + oxidized 2[4Fe-4S]-[ferredoxin] + 2 ADP + 2 phosphate = protochlorophyllide a + reduced 2[4Fe-4S]-[ferredoxin] + 2 ATP + 2 H2O. Its pathway is porphyrin-containing compound metabolism; chlorophyll biosynthesis (light-independent). In terms of biological role, component of the dark-operative protochlorophyllide reductase (DPOR) that uses Mg-ATP and reduced ferredoxin to reduce ring D of protochlorophyllide (Pchlide) to form chlorophyllide a (Chlide). This reaction is light-independent. The NB-protein (ChlN-ChlB) is the catalytic component of the complex. The chain is Light-independent protochlorophyllide reductase subunit B from Cyanophora paradoxa.